We begin with the raw amino-acid sequence, 363 residues long: Pyrimidine monooxygenase RutA (363 aa).

FMN contacts are provided by residues 49–50 (IK), N115, E124, 140–141 (RY), and S190.

The protein belongs to the NtaA/SnaA/DszA monooxygenase family. RutA subfamily.

The enzyme catalyses uracil + FMNH2 + NADH + O2 = (Z)-3-ureidoacrylate + FMN + NAD(+) + H2O + H(+). It catalyses the reaction thymine + FMNH2 + NADH + O2 = (Z)-2-methylureidoacrylate + FMN + NAD(+) + H2O + H(+). Catalyzes the pyrimidine ring opening between N-3 and C-4 by an unusual flavin hydroperoxide-catalyzed mechanism, adding oxygen atoms in the process to yield ureidoacrylate peracid, that immediately reacts with FMN forming ureidoacrylate and FMN-N(5)-oxide. The FMN-N(5)-oxide reacts spontaneously with NADH to produce FMN. Requires the flavin reductase RutF to regenerate FMN in vivo. The chain is Pyrimidine monooxygenase RutA from Escherichia coli O127:H6 (strain E2348/69 / EPEC).